Reading from the N-terminus, the 79-residue chain is Protein FAM236A (79 aa).

This sequence belongs to the FAM236 family.

This chain is Protein FAM236A, found in Homo sapiens (Human).